The following is a 599-amino-acid chain: Aspartate--tRNA(Asp/Asn) ligase (599 aa).

Glu-174 is a binding site for L-aspartate. An aspartate region spans residues Gln-198–Lys-201. L-aspartate is bound at residue Arg-220. Residues Arg-220–Glu-222 and Gln-229 contribute to the ATP site. Residue His-457 coordinates L-aspartate. Residue Glu-491 coordinates ATP. Arg-498 provides a ligand contact to L-aspartate. Position 543–546 (Gly-543–Arg-546) interacts with ATP.

Belongs to the class-II aminoacyl-tRNA synthetase family. Type 1 subfamily. As to quaternary structure, homodimer.

It is found in the cytoplasm. The enzyme catalyses tRNA(Asx) + L-aspartate + ATP = L-aspartyl-tRNA(Asx) + AMP + diphosphate. Its function is as follows. Aspartyl-tRNA synthetase with relaxed tRNA specificity since it is able to aspartylate not only its cognate tRNA(Asp) but also tRNA(Asn). Reaction proceeds in two steps: L-aspartate is first activated by ATP to form Asp-AMP and then transferred to the acceptor end of tRNA(Asp/Asn). This is Aspartate--tRNA(Asp/Asn) ligase from Paraburkholderia phymatum (strain DSM 17167 / CIP 108236 / LMG 21445 / STM815) (Burkholderia phymatum).